The primary structure comprises 61 residues: Cytotoxin homolog 2 (61 aa).

4 cysteine pairs are disulfide-bonded: C3–C22, C15–C39, C43–C54, and C55–C60.

Belongs to the three-finger toxin family. Short-chain subfamily. Orphan group XV sub-subfamily. Expressed by the venom gland.

The protein localises to the secreted. It localises to the target cell membrane. Has low cytotoxic activity. The polypeptide is Cytotoxin homolog 2 (Naja melanoleuca (Forest cobra)).